The chain runs to 426 residues: Glutamate-1-semialdehyde 2,1-aminomutase (426 aa).

K268 carries the post-translational modification N6-(pyridoxal phosphate)lysine.

The protein belongs to the class-III pyridoxal-phosphate-dependent aminotransferase family. HemL subfamily. It depends on pyridoxal 5'-phosphate as a cofactor.

It localises to the cytoplasm. The catalysed reaction is (S)-4-amino-5-oxopentanoate = 5-aminolevulinate. Its pathway is porphyrin-containing compound metabolism; protoporphyrin-IX biosynthesis; 5-aminolevulinate from L-glutamyl-tRNA(Glu): step 2/2. The chain is Glutamate-1-semialdehyde 2,1-aminomutase from Saccharolobus islandicus (strain Y.N.15.51 / Yellowstone #2) (Sulfolobus islandicus).